We begin with the raw amino-acid sequence, 218 residues long: MAEGPSLHPKLQVASNIPIEISSQIPQELAKNLPFQMSQSPLVTPGSTMQSSLSVPERNLLQQESEGPSRQSGCMPLSDKYVNKQTGLLASRNFRKERIVYSKEQQRLLQKHFDECQYPKEKKIVELAVLIGVTKMEIKKWFKNNRAKYRQMNLQNIKQALPESNGSSKAVSESTHFPGSIPVVASDNGESICSGTFGEDSIPKFNCSQESSLYCFQA.

The span at 40 to 72 shows a compositional bias: polar residues; the sequence is SPLVTPGSTMQSSLSVPERNLLQQESEGPSRQS. Residues 40–77 form a disordered region; the sequence is SPLVTPGSTMQSSLSVPERNLLQQESEGPSRQSGCMPL. A DNA-binding region (homeobox) is located at residues 94-153; that stretch reads FRKERIVYSKEQQRLLQKHFDECQYPKEKKIVELAVLIGVTKMEIKKWFKNNRAKYRQMN.

This sequence belongs to the paired homeobox family. Obox subfamily. As to expression, specifically expressed in oocytes and early embryos.

It localises to the nucleus. Functionally, transcription factor required for zygotic genome activation (ZGA), a critical event in early embryonic development during which the developmental control passes from maternally provided mRNAs to the expression of the zygotic genome after fertilization. Together with other Obox family members, required in early two-cell stage embryos to kick-start the major ZGA wave by facilitating RNA Polymerase II 'pre-configuration', during which RNA Polymerase II relocates from the initial one-cell stage binding targets to ZGA gene promoters and distal enhancers. Mechanistically, promotes recruitment of RNA Polymerase II from (CG-rich) non-ZGA genes to (CG-poor) ZGA genes at the two-cell stage. Binds to regulatory DNA sequences containing a 5'-ACNCCTTTAATCCCAG-3' sequence motif. Most maternal and zygotic Obox family proteins can compensate for one another. The chain is Oocyte-specific homeobox protein 7 from Mus musculus (Mouse).